The primary structure comprises 182 residues: Ribosome-recycling factor (182 aa).

This sequence belongs to the RRF family.

The protein localises to the cytoplasm. In terms of biological role, responsible for the release of ribosomes from messenger RNA at the termination of protein biosynthesis. May increase the efficiency of translation by recycling ribosomes from one round of translation to another. The sequence is that of Ribosome-recycling factor from Synechococcus sp. (strain WH7803).